We begin with the raw amino-acid sequence, 144 residues long: Ribonuclease H (144 aa).

One can recognise an RNase H type-1 domain in the interval methionine 1–aspartate 141. Aspartate 9, glutamate 47, aspartate 69, and aspartate 133 together coordinate Mg(2+).

It belongs to the RNase H family. As to quaternary structure, monomer. Mg(2+) is required as a cofactor.

The protein resides in the cytoplasm. The enzyme catalyses Endonucleolytic cleavage to 5'-phosphomonoester.. Its function is as follows. Endonuclease that specifically degrades the RNA of RNA-DNA hybrids. The polypeptide is Ribonuclease H (Erythrobacter litoralis (strain HTCC2594)).